A 113-amino-acid chain; its full sequence is Mitochondrial import inner membrane translocase subunit PAM16 like 1 (113 aa).

Residues 1–48 (MAARVLASVIVMGSGIIARACTQAYRQALANASKTGVAHEATQTIKRG) constitute a mitochondrion transit peptide. Residues 55 to 104 (EARQILGVTEKSSWDEILKKYDTLFERNAQNGSFYLQSKVHRAKECLETA) form a J-like region.

The protein belongs to the TIM16/PAM16 family. In terms of tissue distribution, expressed at low levels in seedlings, rosettes and inflorescence.

Its subcellular location is the mitochondrion inner membrane. In terms of biological role, regulates ATP-dependent protein translocation into the mitochondrial matrix. The polypeptide is Mitochondrial import inner membrane translocase subunit PAM16 like 1 (Arabidopsis thaliana (Mouse-ear cress)).